The chain runs to 476 residues: RNA-binding protein 45 (476 aa).

The interval 1 to 20 is disordered; it reads MDEAGSSASGGGFRPGVDSL. 2 consecutive RRM domains span residues 26 to 106 and 121 to 195; these read SRIF…IAQS and TRIF…PKNK. Residue K34 forms a Glycyl lysine isopeptide (Lys-Gly) (interchain with G-Cter in SUMO2) linkage. S199 and S464 each carry phosphoserine. In terms of domain architecture, RRM 3 spans 392–464; the sequence is ERLFIVFNPH…VRLKVMLADS (73 aa).

It is found in the cytoplasm. Its subcellular location is the nucleus. In terms of biological role, RNA-binding protein with binding specificity for poly(C). May play an important role in neural development. This chain is RNA-binding protein 45 (RBM45), found in Homo sapiens (Human).